A 151-amino-acid polypeptide reads, in one-letter code: Ribosome maturation factor RimP (151 aa).

Belongs to the RimP family.

The protein resides in the cytoplasm. Functionally, required for maturation of 30S ribosomal subunits. This is Ribosome maturation factor RimP from Shewanella sp. (strain MR-4).